The sequence spans 356 residues: Protein RecA (356 aa).

79-86 (GPESSGKT) lines the ATP pocket.

The protein belongs to the RecA family.

It is found in the cytoplasm. Can catalyze the hydrolysis of ATP in the presence of single-stranded DNA, the ATP-dependent uptake of single-stranded DNA by duplex DNA, and the ATP-dependent hybridization of homologous single-stranded DNAs. It interacts with LexA causing its activation and leading to its autocatalytic cleavage. The polypeptide is Protein RecA (Borrelia hermsii (strain HS1 / DAH)).